The chain runs to 272 residues: Zinc finger protein 32 (272 aa).

The span at 50-65 (RREKLEQKSPESKALQ) shows a compositional bias: basic and acidic residues. The segment at 50-69 (RREKLEQKSPESKALQEDSP) is disordered. 3 C2H2-type zinc fingers span residues 76–98 (YDCQECGKSFRQKGSLTLHERIH), 104–126 (FECTQCGKSFRAKGNLVTHQRIH), and 132–154 (YQCKECGKSFSQRGSLAVHERLH). Positions 78, 81, 94, 98, 106, 109, 122, 126, 140, 143, 156, 160, 197, 200, 213, 217, 246, 249, 262, and 266 each coordinate Zn(2+). 2 C2H2-type zinc fingers span residues 160 to 182 (YECAICQRSFRNQSNLAVHRRVH) and 188 to 210 (YRCDQCGKAFSQKGSLIVHIRVH). The C2H2-type 6 zinc finger occupies 216 to 238 (YACSHCRKSFHTRGNCLLHGKVH). A CCHC-type zinc finger spans residues 244–266 (YLCGQCGKSFTQRGSLAVHQRSC).

Belongs to the krueppel C2H2-type zinc-finger protein family.

Its subcellular location is the nucleus. Functionally, may be involved in transcriptional regulation. This chain is Zinc finger protein 32 (Znf32), found in Mus musculus (Mouse).